The following is a 235-amino-acid chain: Peptidase E (235 aa).

Active-site charge relay system residues include Ser122, Asp137, and His159.

Belongs to the peptidase S51 family.

The protein resides in the cytoplasm. The enzyme catalyses Dipeptidase E catalyzes the hydrolysis of dipeptides Asp-|-Xaa. It does not act on peptides with N-terminal Glu, Asn or Gln, nor does it cleave isoaspartyl peptides.. Hydrolyzes dipeptides containing N-terminal aspartate residues. May play a role in allowing the cell to use peptide aspartate to spare carbon otherwise required for the synthesis of the aspartate family of amino acids. This chain is Peptidase E, found in Shewanella denitrificans (strain OS217 / ATCC BAA-1090 / DSM 15013).